The chain runs to 196 residues: Peptidyl-tRNA hydrolase (196 aa).

H15 is a tRNA binding site. The Proton acceptor role is filled by H20. Residues Y66, N68, and N114 each coordinate tRNA.

The protein belongs to the PTH family. In terms of assembly, monomer.

The protein localises to the cytoplasm. The catalysed reaction is an N-acyl-L-alpha-aminoacyl-tRNA + H2O = an N-acyl-L-amino acid + a tRNA + H(+). Hydrolyzes ribosome-free peptidyl-tRNAs (with 1 or more amino acids incorporated), which drop off the ribosome during protein synthesis, or as a result of ribosome stalling. In terms of biological role, catalyzes the release of premature peptidyl moieties from peptidyl-tRNA molecules trapped in stalled 50S ribosomal subunits, and thus maintains levels of free tRNAs and 50S ribosomes. The chain is Peptidyl-tRNA hydrolase from Polynucleobacter necessarius subsp. necessarius (strain STIR1).